A 465-amino-acid polypeptide reads, in one-letter code: SHC-transforming protein 1 (465 aa).

The 184-residue stretch at 44–227 (MGPGVPYLVR…AGFDGSAWDE (184 aa)) folds into the PID domain. A CH1 region spans residues 228–369 (EEEELPDHAY…SMEDQLKREP (142 aa)). Positions 281–315 (VSGAEQDSRKMQPTLQGRERFPVPCSRPPNRPDLF) are disordered. An SH2 domain is found at 370-461 (WYQGKMSRKE…GSELCLQQPV (92 aa)).

In terms of assembly, interacts with grb2. In terms of tissue distribution, highly expressed in oocytes and embryo. Also expressed in liver. Detected in ovary, testis and heart and to a lesser extent in liver (at protein level).

The protein localises to the cytoplasm. In terms of biological role, implicated in ras-dependent oocyte maturation induced by insulin/IGF1. This is SHC-transforming protein 1 (shc1) from Xenopus laevis (African clawed frog).